The sequence spans 91 residues: ITCGQVSSALAPCIPYVRGGGAVPPACCNGIRNVNNLARTTPDRQAACNCLKQLSASVPGVNPNNAAALPGKCGVHIPYKISASTNCATVK.

4 disulfide bridges follow: C3/C50, C13/C27, C28/C73, and C48/C87.

The protein belongs to the plant LTP family.

Its function is as follows. Plant non-specific lipid-transfer proteins transfer phospholipids as well as galactolipids across membranes. May play a role in wax or cutin deposition in the cell walls of expanding epidermal cells and certain secretory tissues. The polypeptide is Non-specific lipid-transfer protein 1 (Prunus persica (Peach)).